We begin with the raw amino-acid sequence, 113 residues long: U11-theraphotoxin-Hhn1a (113 aa).

The signal sequence occupies residues 1–21; sequence MNTVRATFLLVFVLAVSLGQA. Positions 22 to 74 are excised as a propeptide; it reads DKDENRMEMQEKTEQGKSYLDFAENLLLQKLEELEAKLLEEDSEESRNSRQKR. The segment covering 60-69 has biased composition (basic and acidic residues); sequence LEEDSEESRN. The tract at residues 60 to 82 is disordered; sequence LEEDSEESRNSRQKRCIGEGVPC. Intrachain disulfides connect C75–C90, C82–C95, and C89–C110.

It belongs to the neurotoxin 14 (magi-1) family. 01 (HNTX-16) subfamily. Expressed by the venom gland.

It localises to the secreted. Its function is as follows. Probable ion channel inhibitor. The sequence is that of U11-theraphotoxin-Hhn1a from Cyriopagopus hainanus (Chinese bird spider).